A 1249-amino-acid polypeptide reads, in one-letter code: Protein lingerer (1249 aa).

The disordered stretch occupies residues 1 to 66 (MSTQTRSGGG…VVKAKQPTAE (66 aa)). Composition is skewed to gly residues over residues 7–30 (SGGGGGGGGRNKEAGGGSGGGAAG) and 38–50 (GSTGAASGAGAGG). A UBA domain is found at 84-124 (KIQEKIQSLMETTQRSEEEVCCALQECDSDLDRAVIFLLET). Disordered stretches follow at residues 132-312 (TTSK…LKPE), 350-375 (SAGAGAQQQQSQQSTQTGVPPAASNV), 454-506 (MPPM…PPTT), 549-579 (YAAAATQQPPVRRQRARVPPPSKIPSSAVEM), 616-717 (TTGT…TSVS), 738-922 (PYGQ…SLPI), 1016-1042 (GRFTRTDNNSSPVSNVPSSLSQQTGSG), 1124-1149 (QQQSKGQTVANQQSGSGSGSDMAPSM), 1164-1186 (KQSFHSGTPPPYNIAGTQTAGTT), and 1211-1249 (QNMHQDSNSSGQRPQNNNQGKTASKQQGYSASTYWTGPN). A compositionally biased stretch (gly residues) spans 186 to 209 (NRGGSGNQRSGGPGRGGRAGGYRD). Basic and acidic residues predominate over residues 210–227 (GGGDRDRDRDRNGYDKGG). Composition is skewed to gly residues over residues 228-240 (EGGGYRNRAGGDG) and 248-269 (DGPGGPGRGNYGSRGGRGGGPR). The segment covering 350–369 (SAGAGAQQQQSQQSTQTGVP) has biased composition (low complexity). A compositionally biased stretch (polar residues) spans 457–494 (MNTSSSLSAEQSQYFSTLSSQNSNLQPTPSAVGFQQQP). 3 stretches are compositionally biased toward low complexity: residues 549–559 (YAAAATQQPPV), 616–639 (TTGTAGSSTVQQQQQGAQVPPATV), and 647–664 (QSQLQQQQQQVVSQAPQQ). The span at 678 to 705 (ASSQIMPGQGTTEALSSQNDGLANSYSR) shows a compositional bias: polar residues. The segment covering 706 to 717 (TNASGSVSTSVS) has biased composition (low complexity). Composition is skewed to polar residues over residues 738 to 769 (PYGQSASTNTALTGGYQNAPYSSTQANKTASY) and 777 to 809 (GYNNMSYSNNQVTNAYPPSTNNYSSYNQGNVNA). Over residues 811-861 (QPPSSSVTNNVVPNNNTGNSVGGVSNQSNLPVNNNAVNSSSNNNAGGYLSS) the composition is skewed to low complexity. Residues 862-873 (QYPVSQTSSAFP) show a composition bias toward polar residues. Low complexity-rich tracts occupy residues 874–884 (SQQNYQNSSQN), 892–922 (NSNTGVASSTVSNSSTNNSNNNVTSSSSLPI), and 1023–1034 (NNSSPVSNVPSS). The segment covering 1124 to 1138 (QQQSKGQTVANQQSG) has biased composition (polar residues). The span at 1216–1249 (DSNSSGQRPQNNNQGKTASKQQGYSASTYWTGPN) shows a compositional bias: polar residues.

It is found in the cytoplasm. In terms of biological role, acts in the nervous system to mediate the control of copulatory organs during courtship. This chain is Protein lingerer, found in Anopheles gambiae (African malaria mosquito).